Reading from the N-terminus, the 305-residue chain is Imidazoleglycerol-phosphate dehydratase (305 aa).

Belongs to the imidazoleglycerol-phosphate dehydratase family.

It is found in the cytoplasm. It carries out the reaction D-erythro-1-(imidazol-4-yl)glycerol 3-phosphate = 3-(imidazol-4-yl)-2-oxopropyl phosphate + H2O. It functions in the pathway amino-acid biosynthesis; L-histidine biosynthesis; L-histidine from 5-phospho-alpha-D-ribose 1-diphosphate: step 6/9. The sequence is that of Imidazoleglycerol-phosphate dehydratase from Neisseria meningitidis serogroup C (strain 053442).